A 268-amino-acid chain; its full sequence is MLGITVLAAILACASCCGNPAFPPNLSTRVVGGEDAVPNSWPWQVSLQYLKDDTWRHTCGGSLITTSHVLTAAHCINKDFTYRVGLGKYNLTVEDEEGSVYAEVDTIYVHEKWNRLFLWNDIAIIKLAEPVELSNTIQVACIPEEGSLLPQDYPCYVTGWGRLWTNGPIAEVLQQGLQPIVSHATCSRLDWWFIKVRKTMVCAGGDGVISACNGDSGGPLNCQAEDGSWQVHGIVSFGSSSGCNVHKKPVVFTRVSAYNDWINEKIQL.

Positions 1–16 are cleaved as a signal peptide; it reads MLGITVLAAILACASC. Positions 17 to 29 are cleaved as a propeptide — activation peptide; sequence CGNPAFPPNLSTR. Disulfide bonds link Cys17–Cys141, Cys59–Cys75, Cys155–Cys222, Cys186–Cys202, and Cys212–Cys243. N-linked (GlcNAc...) asparagine glycosylation is present at Asn25. The Peptidase S1 domain maps to 30-267; that stretch reads VVGGEDAVPN…YNDWINEKIQ (238 aa). His74 serves as the catalytic Charge relay system. An N-linked (GlcNAc...) asparagine glycan is attached at Asn90. The Charge relay system role is filled by Asp121. Ser216 serves as the catalytic Charge relay system.

Belongs to the peptidase S1 family. Elastase subfamily. As to expression, pancreas.

It carries out the reaction Preferential cleavage: Leu-|-Xaa, Tyr-|-Xaa, Phe-|-Xaa, Met-|-Xaa, Trp-|-Xaa, Gln-|-Xaa, Asn-|-Xaa.. Regulates activation and degradation of trypsinogens and procarboxypeptidases by targeting specific cleavage sites within their zymogen precursors. Has chymotrypsin-type protease activity and hypocalcemic activity. Cleaves TRY4 and TRY5 and thereby inhibits their autoactivation. The protein is Chymotrypsin-C (Ctrc) of Rattus norvegicus (Rat).